A 63-amino-acid chain; its full sequence is Large ribosomal subunit protein uL29 (63 aa).

It belongs to the universal ribosomal protein uL29 family.

In Alteromonas mediterranea (strain DSM 17117 / CIP 110805 / LMG 28347 / Deep ecotype), this protein is Large ribosomal subunit protein uL29.